The primary structure comprises 326 residues: Tetraacyldisaccharide 4'-kinase (326 aa).

55–62 (TAGGNGKT) contacts ATP.

It belongs to the LpxK family.

It carries out the reaction a lipid A disaccharide + ATP = a lipid IVA + ADP + H(+). It functions in the pathway glycolipid biosynthesis; lipid IV(A) biosynthesis; lipid IV(A) from (3R)-3-hydroxytetradecanoyl-[acyl-carrier-protein] and UDP-N-acetyl-alpha-D-glucosamine: step 6/6. In terms of biological role, transfers the gamma-phosphate of ATP to the 4'-position of a tetraacyldisaccharide 1-phosphate intermediate (termed DS-1-P) to form tetraacyldisaccharide 1,4'-bis-phosphate (lipid IVA). The polypeptide is Tetraacyldisaccharide 4'-kinase (Klebsiella pneumoniae subsp. pneumoniae (strain ATCC 700721 / MGH 78578)).